A 443-amino-acid chain; its full sequence is Chromosome partition protein MukF (443 aa).

The tract at residues 209–237 (LDETSGNLRELQDTLNAAGDKLQAQLLRI) is leucine-zipper.

This sequence belongs to the MukF family. As to quaternary structure, interacts, and probably forms a ternary complex, with MukE and MukB via its C-terminal region. The complex formation is stimulated by calcium or magnesium. It is required for an interaction between MukE and MukB.

Its subcellular location is the cytoplasm. The protein localises to the nucleoid. In terms of biological role, involved in chromosome condensation, segregation and cell cycle progression. May participate in facilitating chromosome segregation by condensation DNA from both sides of a centrally located replisome during cell division. Not required for mini-F plasmid partitioning. Probably acts via its interaction with MukB and MukE. Overexpression results in anucleate cells. It has a calcium binding activity. The polypeptide is Chromosome partition protein MukF (Actinobacillus pleuropneumoniae serotype 7 (strain AP76)).